The sequence spans 421 residues: UDP-N-acetylglucosamine 1-carboxyvinyltransferase (421 aa).

22–23 (KN) is a phosphoenolpyruvate binding site. Arg92 serves as a coordination point for UDP-N-acetyl-alpha-D-glucosamine. Cys116 serves as the catalytic Proton donor. At Cys116 the chain carries 2-(S-cysteinyl)pyruvic acid O-phosphothioketal. Residues 121–125 (RPVDQ), Asp308, and Ile330 contribute to the UDP-N-acetyl-alpha-D-glucosamine site.

This sequence belongs to the EPSP synthase family. MurA subfamily.

Its subcellular location is the cytoplasm. It catalyses the reaction phosphoenolpyruvate + UDP-N-acetyl-alpha-D-glucosamine = UDP-N-acetyl-3-O-(1-carboxyvinyl)-alpha-D-glucosamine + phosphate. The protein operates within cell wall biogenesis; peptidoglycan biosynthesis. Its function is as follows. Cell wall formation. Adds enolpyruvyl to UDP-N-acetylglucosamine. The chain is UDP-N-acetylglucosamine 1-carboxyvinyltransferase from Ralstonia nicotianae (strain ATCC BAA-1114 / GMI1000) (Ralstonia solanacearum).